A 73-amino-acid chain; its full sequence is DNA-directed RNA polymerase subunit omega (73 aa).

This sequence belongs to the RNA polymerase subunit omega family. As to quaternary structure, in cyanobacteria the RNAP catalytic core is composed of 2 alpha, 1 beta, 1 beta', 1 gamma and 1 omega subunit. When a sigma factor is associated with the core the holoenzyme is formed, which can initiate transcription.

The enzyme catalyses RNA(n) + a ribonucleoside 5'-triphosphate = RNA(n+1) + diphosphate. Functionally, promotes RNA polymerase assembly. Latches the N- and C-terminal regions of the beta' subunit thereby facilitating its interaction with the beta and alpha subunits. The sequence is that of DNA-directed RNA polymerase subunit omega from Gloeobacter violaceus (strain ATCC 29082 / PCC 7421).